We begin with the raw amino-acid sequence, 250 residues long: Probable transcriptional regulatory protein Cag_0165 (250 aa).

This sequence belongs to the TACO1 family.

The protein resides in the cytoplasm. This Chlorobium chlorochromatii (strain CaD3) protein is Probable transcriptional regulatory protein Cag_0165.